Consider the following 472-residue polypeptide: Glycosyl hydrolase family 109 protein (472 aa).

A signal peptide (tat-type signal) is located at residues 1 to 35 (MSQTPAVSRRLLLGSAAATGALATGIGSAAPVAAA). Residues 68–69 (NR), Asp90, 139–142 (WEFH), His145, 159–160 (EL), and Asn188 contribute to the NAD(+) site. Substrate-binding positions include Tyr217, Arg236, 248–251 (YPMH), and Tyr330. An NAD(+)-binding site is contributed by Tyr248.

This sequence belongs to the Gfo/Idh/MocA family. Glycosyl hydrolase 109 subfamily. NAD(+) is required as a cofactor. Post-translationally, predicted to be exported by the Tat system. The position of the signal peptide cleavage has not been experimentally proven.

In terms of biological role, glycosidase. Has no alpha-N-acetylgalactosaminidase activity. The polypeptide is Glycosyl hydrolase family 109 protein (Streptomyces coelicolor (strain ATCC BAA-471 / A3(2) / M145)).